A 342-amino-acid polypeptide reads, in one-letter code: uncharacterized protein (342 aa).

Residues 1–18 form the signal peptide; it reads MWKKLMLLLLMAIPLVSA.

This is an uncharacterized protein from Methanocaldococcus jannaschii (strain ATCC 43067 / DSM 2661 / JAL-1 / JCM 10045 / NBRC 100440) (Methanococcus jannaschii).